A 143-amino-acid chain; its full sequence is Large-conductance mechanosensitive channel (143 aa).

2 consecutive transmembrane segments (helical) span residues 10-30 (FAVKGNVMDLAVGVIIGGAFS) and 89-109 (GSFITVAINFVILAFIIFLMV).

The protein belongs to the MscL family. Homopentamer.

Its subcellular location is the cell inner membrane. Functionally, channel that opens in response to stretch forces in the membrane lipid bilayer. May participate in the regulation of osmotic pressure changes within the cell. The chain is Large-conductance mechanosensitive channel from Burkholderia cenocepacia (strain ATCC BAA-245 / DSM 16553 / LMG 16656 / NCTC 13227 / J2315 / CF5610) (Burkholderia cepacia (strain J2315)).